Consider the following 836-residue polypeptide: Tuftelin-interacting protein 11 (836 aa).

The segment covering 1 to 13 has biased composition (basic and acidic residues); that stretch reads MSLSHLYRDGEGH. 3 disordered regions span residues 1–31, 54–73, and 85–136; these read MSLSHLYRDGEGHMDDDEDERENFEITDWDL, WAERDSDEERPSFGGKRARD, and LKKG…AGGT. Positions 1-50 are required for interaction with DHX15; the sequence is MSLSHLYRDGEGHMDDDEDERENFEITDWDLQNEFNPNRQRHWQTKEEAT. Ser-2 is modified (phosphoserine). Positions 14–28 are enriched in acidic residues; sequence MDDDEDERENFEITD. Positions 54–64 are enriched in basic and acidic residues; that stretch reads WAERDSDEERP. Residues Ser-59 and Ser-98 each carry the phosphoserine modification. Positions 91–102 are enriched in acidic residues; sequence EEAELEDSDDEE. The segment covering 103-116 has biased composition (basic and acidic residues); that stretch reads KPVKQDEFPKDFGP. A Phosphoserine modification is found at Ser-144. Residues 149–195 enclose the G-patch domain; the sequence is TKGIGQKLLQKMGYVPGRGLGKNAQGIINPIEAKQRKGKGAVGAYGS. Residues 183-236 form a disordered region; it reads QRKGKGAVGAYGSERTTQSLQDFPVVDSEEEAEEEFQKELSQWRKDPSGSKKKP. Position 210 is a phosphoserine (Ser-210). A compositionally biased stretch (basic and acidic residues) spans 217-231; the sequence is EFQKELSQWRKDPSG. The short motif at 699–704 is the Nuclear localization signal element; that stretch reads VKDKFN. Positions 709 to 733 are required for nuclear speckle localization; that stretch reads IMNRAVSSNVGAYMQPGARENIAYL.

It belongs to the TFP11/STIP family. In terms of assembly, identified in the spliceosome C complex. Found in the Intron Large (IL) complex, a post-mRNA release spliceosomal complex containing the excised intron, U2, U5 and U6 snRNPs, and splicing factors. Interacts with TUFT1. Interacts with DHX15; indicative for a recruitment of DHX15 to the IL complex. Interacts with GCFC2.

It is found in the cytoplasm. The protein localises to the nucleus. In terms of biological role, involved in pre-mRNA splicing, specifically in spliceosome disassembly during late-stage splicing events. Intron turnover seems to proceed through reactions in two lariat-intron associated complexes termed Intron Large (IL) and Intron Small (IS). In cooperation with DHX15 seems to mediate the transition of the U2, U5 and U6 snRNP-containing IL complex to the snRNP-free IS complex leading to efficient debranching and turnover of excised introns. May play a role in the differentiation of ameloblasts and odontoblasts or in the forming of the enamel extracellular matrix. The polypeptide is Tuftelin-interacting protein 11 (TFIP11) (Sus scrofa (Pig)).